Here is an 861-residue protein sequence, read N- to C-terminus: Leucine--tRNA ligase (861 aa).

The short motif at 42–52 (PYPSGRIHMGH) is the 'HIGH' region element. A 'KMSKS' region motif is present at residues 623–627 (KMSKS). Lysine 626 serves as a coordination point for ATP.

Belongs to the class-I aminoacyl-tRNA synthetase family.

The protein resides in the cytoplasm. It catalyses the reaction tRNA(Leu) + L-leucine + ATP = L-leucyl-tRNA(Leu) + AMP + diphosphate. The chain is Leucine--tRNA ligase from Caulobacter vibrioides (strain ATCC 19089 / CIP 103742 / CB 15) (Caulobacter crescentus).